The sequence spans 377 residues: Phosphatidylglycerol--prolipoprotein diacylglyceryl transferase (377 aa).

4 helical membrane passes run Pro18 to Val38, Met48 to Ala68, Ile93 to Leu113, and Gly119 to Ile139. Arg141 is an a 1,2-diacyl-sn-glycero-3-phospho-(1'-sn-glycerol) binding site. Helical transmembrane passes span Gln177 to Val197, Leu208 to Ile228, and Arg238 to Val258. The disordered stretch occupies residues Asp265–Thr377. 2 stretches are compositionally biased toward low complexity: residues Ala288–Arg297 and Gly308–Gly344.

This sequence belongs to the Lgt family.

Its subcellular location is the cell membrane. It catalyses the reaction L-cysteinyl-[prolipoprotein] + a 1,2-diacyl-sn-glycero-3-phospho-(1'-sn-glycerol) = an S-1,2-diacyl-sn-glyceryl-L-cysteinyl-[prolipoprotein] + sn-glycerol 1-phosphate + H(+). It functions in the pathway protein modification; lipoprotein biosynthesis (diacylglyceryl transfer). Its function is as follows. Catalyzes the transfer of the diacylglyceryl group from phosphatidylglycerol to the sulfhydryl group of the N-terminal cysteine of a prolipoprotein, the first step in the formation of mature lipoproteins. The sequence is that of Phosphatidylglycerol--prolipoprotein diacylglyceryl transferase from Frankia alni (strain DSM 45986 / CECT 9034 / ACN14a).